The chain runs to 104 residues: Large ribosomal subunit protein bL21c (104 aa).

This sequence belongs to the bacterial ribosomal protein bL21 family. In terms of assembly, part of the 50S ribosomal subunit.

It is found in the plastid. It localises to the chloroplast. Its function is as follows. This protein binds to 23S rRNA. The polypeptide is Large ribosomal subunit protein bL21c (Pyropia yezoensis (Susabi-nori)).